The following is a 141-amino-acid chain: Ribonuclease VapC16 (141 aa).

Asp99 is a binding site for Mg(2+). The interval 99–141 (DHAHTAHRRASGSPSTSIRPCAHRPGTAAWPDDHHRRRPVSCL) is disordered.

The protein belongs to the PINc/VapC protein family. Mg(2+) serves as cofactor.

Its function is as follows. Toxic component of a type II toxin-antitoxin (TA) system. An RNase. The cognate antitoxin is VapB16. This chain is Ribonuclease VapC16, found in Mycobacterium tuberculosis (strain ATCC 25618 / H37Rv).